We begin with the raw amino-acid sequence, 129 residues long: Fluoride-specific ion channel FluC (129 aa).

The next 4 helical transmembrane spans lie at 8–28 (ILLVGVGGFLGSVARYLVALW), 34–54 (AVFPFATLTVNLLGSFLIGFI), 70–90 (IFLVTGFCGGFTTFSSYMIEH), and 102–122 (AALYLFGSLIGGFIALYLGII). Positions 78 and 81 each coordinate Na(+).

It belongs to the fluoride channel Fluc/FEX (TC 1.A.43) family.

The protein resides in the cell inner membrane. The enzyme catalyses fluoride(in) = fluoride(out). Its activity is regulated as follows. Na(+) is not transported, but it plays an essential structural role and its presence is essential for fluoride channel function. Functionally, fluoride-specific ion channel. Important for reducing fluoride concentration in the cell, thus reducing its toxicity. The polypeptide is Fluoride-specific ion channel FluC (Chlorobium chlorochromatii (strain CaD3)).